The primary structure comprises 95 residues: Phosphoribosyl-ATP pyrophosphatase (95 aa).

The protein belongs to the PRA-PH family.

It is found in the cytoplasm. The enzyme catalyses 1-(5-phospho-beta-D-ribosyl)-ATP + H2O = 1-(5-phospho-beta-D-ribosyl)-5'-AMP + diphosphate + H(+). It participates in amino-acid biosynthesis; L-histidine biosynthesis; L-histidine from 5-phospho-alpha-D-ribose 1-diphosphate: step 2/9. The polypeptide is Phosphoribosyl-ATP pyrophosphatase (Halobacterium salinarum (strain ATCC 29341 / DSM 671 / R1)).